The sequence spans 320 residues: R2-like ligand binding oxidase (320 aa).

Residues Glu-68, Glu-101, and His-104 each contribute to the Mn(2+) site. The segment at residues 71–162 (VTKDIQPFMS…AAQVRASVVY (92 aa)) is a cross-link (3-(O4'-tyrosyl)-valine (Val-Tyr)). Glu-101 lines the Fe cation pocket. Fe cation is bound by residues Glu-167, Glu-202, and His-205.

Belongs to the ribonucleoside diphosphate reductase small chain family. R2-like ligand binding oxidase subfamily. Homodimer. It depends on Fe cation as a cofactor. Mn(2+) serves as cofactor.

Probable oxidase that might be involved in lipid metabolism. This is R2-like ligand binding oxidase (nrdB) from Mycolicibacterium smegmatis (strain ATCC 700084 / mc(2)155) (Mycobacterium smegmatis).